We begin with the raw amino-acid sequence, 277 residues long: Putative phosphoenolpyruvate synthase regulatory protein (277 aa).

Residue 157 to 164 (GVSRCGKT) participates in ADP binding.

The protein belongs to the pyruvate, phosphate/water dikinase regulatory protein family. PSRP subfamily.

It carries out the reaction [pyruvate, water dikinase] + ADP = [pyruvate, water dikinase]-phosphate + AMP + H(+). The catalysed reaction is [pyruvate, water dikinase]-phosphate + phosphate + H(+) = [pyruvate, water dikinase] + diphosphate. Its function is as follows. Bifunctional serine/threonine kinase and phosphorylase involved in the regulation of the phosphoenolpyruvate synthase (PEPS) by catalyzing its phosphorylation/dephosphorylation. This Photobacterium profundum (strain SS9) protein is Putative phosphoenolpyruvate synthase regulatory protein.